A 181-amino-acid polypeptide reads, in one-letter code: MSFVPEKVFFTKGVGRHKEYLSSFELALRDAKIEKCNLVTVSSIFPPKCERLSVEEGLKRLSPGEITFAVMARNSTNEHNRLIASSIGVALPADESLYGYLSEHHPYGQTSEQSGEYAEDLAATMLATTLGIEFDPNKDWDEREGIYKMSGKIINSFNITQSAEGEDGLWTTVIACAVLLP.

Pyruvic acid (Ser) is present on serine 43.

Belongs to the PdaD family. Pyruvate serves as cofactor.

The enzyme catalyses L-arginine + H(+) = agmatine + CO2. This Chlorobium phaeobacteroides (strain BS1) protein is Probable pyruvoyl-dependent arginine decarboxylase.